The following is a 163-amino-acid chain: NADH-quinone oxidoreductase subunit I (163 aa).

4Fe-4S ferredoxin-type domains are found at residues 53-83 (LRRYPNGEERCIACKLCEAICPAQAITIEAG) and 94-123 (VRYDIDMVKCIYCGFCQEACPVDAIVEGPN). [4Fe-4S] cluster-binding residues include Cys-63, Cys-66, Cys-69, Cys-73, Cys-103, Cys-106, Cys-109, and Cys-113.

The protein belongs to the complex I 23 kDa subunit family. In terms of assembly, NDH-1 is composed of 14 different subunits. Subunits NuoA, H, J, K, L, M, N constitute the membrane sector of the complex. Requires [4Fe-4S] cluster as cofactor.

The protein resides in the cell inner membrane. It catalyses the reaction a quinone + NADH + 5 H(+)(in) = a quinol + NAD(+) + 4 H(+)(out). Its function is as follows. NDH-1 shuttles electrons from NADH, via FMN and iron-sulfur (Fe-S) centers, to quinones in the respiratory chain. The immediate electron acceptor for the enzyme in this species is believed to be ubiquinone. Couples the redox reaction to proton translocation (for every two electrons transferred, four hydrogen ions are translocated across the cytoplasmic membrane), and thus conserves the redox energy in a proton gradient. The protein is NADH-quinone oxidoreductase subunit I of Chelativorans sp. (strain BNC1).